Consider the following 665-residue polypeptide: Methionine--tRNA ligase (665 aa).

A 'HIGH' region motif is present at residues 12–22; sequence YYPSGKLHIGS. Residues 308 to 312 carry the 'KMSKS' region motif; it reads KMSKS. Lys-311 lines the ATP pocket. The tRNA-binding domain occupies 562-665; that stretch reads TFDAVEIRVA…SSVPNGSIIG (104 aa).

This sequence belongs to the class-I aminoacyl-tRNA synthetase family. MetG type 2B subfamily. In terms of assembly, homodimer.

The protein localises to the cytoplasm. The catalysed reaction is tRNA(Met) + L-methionine + ATP = L-methionyl-tRNA(Met) + AMP + diphosphate. In terms of biological role, is required not only for elongation of protein synthesis but also for the initiation of all mRNA translation through initiator tRNA(fMet) aminoacylation. The chain is Methionine--tRNA ligase (metG) from Streptococcus pyogenes serotype M1.